The primary structure comprises 293 residues: Vibriobactin-specific isochorismatase (293 aa).

The region spanning 211–287 is the Carrier domain; the sequence is KLTGLSLRTM…QWWQTIQANL (77 aa). Residue Ser-248 is modified to O-(pantetheine 4'-phosphoryl)serine.

It belongs to the isochorismatase family. The cofactor is pantetheine 4'-phosphate.

The enzyme catalyses isochorismate + H2O = (2S,3S)-2,3-dihydroxy-2,3-dihydrobenzoate + pyruvate. The protein operates within siderophore biosynthesis; vibriobactin biosynthesis. Involved in the biosynthesis of the catechol siderophore vibriobactin. Vibriobactin is a chelating compound involved in transporting iron from the bacterial environment into the cell cytoplasm. The polypeptide is Vibriobactin-specific isochorismatase (vibB) (Vibrio cholerae serotype O1 (strain ATCC 39541 / Classical Ogawa 395 / O395)).